A 202-amino-acid polypeptide reads, in one-letter code: Dephospho-CoA kinase (202 aa).

The 199-residue stretch at 4–202 (VIGLTGGIAT…TDKGFINKER (199 aa)) folds into the DPCK domain. ATP is bound at residue 12 to 17 (ATGKST).

The protein belongs to the CoaE family.

The protein resides in the cytoplasm. It carries out the reaction 3'-dephospho-CoA + ATP = ADP + CoA + H(+). It functions in the pathway cofactor biosynthesis; coenzyme A biosynthesis; CoA from (R)-pantothenate: step 5/5. Catalyzes the phosphorylation of the 3'-hydroxyl group of dephosphocoenzyme A to form coenzyme A. This chain is Dephospho-CoA kinase, found in Staphylococcus haemolyticus (strain JCSC1435).